A 180-amino-acid polypeptide reads, in one-letter code: Oligoribonuclease (180 aa).

One can recognise an Exonuclease domain in the interval 7-170 (LIWIDLEMTG…DDIRESIAEL (164 aa)). Tyr-128 is an active-site residue.

This sequence belongs to the oligoribonuclease family.

The protein resides in the cytoplasm. In terms of biological role, 3'-to-5' exoribonuclease specific for small oligoribonucleotides. This is Oligoribonuclease from Pseudomonas fluorescens (strain ATCC BAA-477 / NRRL B-23932 / Pf-5).